Reading from the N-terminus, the 418-residue chain is Enolase (418 aa).

(2R)-2-phosphoglycerate is bound at residue glutamine 162. The active-site Proton donor is the glutamate 204. Residues aspartate 241, glutamate 283, and aspartate 309 each coordinate Mg(2+). Positions 334, 363, 364, and 385 each coordinate (2R)-2-phosphoglycerate. Lysine 334 (proton acceptor) is an active-site residue.

Belongs to the enolase family. The cofactor is Mg(2+).

Its subcellular location is the cytoplasm. The protein localises to the secreted. It is found in the cell surface. The catalysed reaction is (2R)-2-phosphoglycerate = phosphoenolpyruvate + H2O. It participates in carbohydrate degradation; glycolysis; pyruvate from D-glyceraldehyde 3-phosphate: step 4/5. Catalyzes the reversible conversion of 2-phosphoglycerate (2-PG) into phosphoenolpyruvate (PEP). It is essential for the degradation of carbohydrates via glycolysis. The sequence is that of Enolase from Pelagibacter ubique (strain HTCC1062).